Consider the following 278-residue polypeptide: Tropomyosin A (278 aa).

A coiled-coil region spans residues 1 to 270 (IMMAMKLEKE…YRAISGELDT (270 aa)). Positions 92-134 (DFEQSSGRLTETSTKLDDASKAAEESERNRKTLETRSISDDER) are disordered. Positions 95–104 (QSSGRLTETS) are enriched in polar residues. Residues 105–134 (TKLDDASKAAEESERNRKTLETRSISDDER) show a composition bias toward basic and acidic residues.

Belongs to the tropomyosin family. As to quaternary structure, homodimer.

Its function is as follows. Tropomyosin, in association with the troponin complex, plays a central role in the calcium dependent regulation of muscle contraction. The chain is Tropomyosin A from Echinococcus granulosus (Hydatid tapeworm).